The chain runs to 516 residues: Glycosyl hydrolase family 109 protein 4 (516 aa).

Residues 1–18 form the signal peptide; that stretch reads MKKIKLLLVAGACVVLSA. Cys19 carries the N-palmitoyl cysteine lipid modification. Cys19 carries the S-diacylglycerol cysteine lipid modification. Residues 76–77, Asp98, 146–149, 166–167, and Asn195 each bind NAD(+); these read MR, WLHH, and EV. Substrate-binding positions include Tyr224, Arg247, 259–262, and Tyr337; that span reads YATH. Tyr259 contacts NAD(+).

The protein belongs to the Gfo/Idh/MocA family. Glycosyl hydrolase 109 subfamily. It depends on NAD(+) as a cofactor.

Its subcellular location is the cell membrane. Functionally, glycosidase. The chain is Glycosyl hydrolase family 109 protein 4 from Phocaeicola vulgatus (strain ATCC 8482 / DSM 1447 / JCM 5826 / CCUG 4940 / NBRC 14291 / NCTC 11154) (Bacteroides vulgatus).